Consider the following 418-residue polypeptide: Gamma-glutamyl phosphate reductase (418 aa).

This sequence belongs to the gamma-glutamyl phosphate reductase family.

It localises to the cytoplasm. It carries out the reaction L-glutamate 5-semialdehyde + phosphate + NADP(+) = L-glutamyl 5-phosphate + NADPH + H(+). The protein operates within amino-acid biosynthesis; L-proline biosynthesis; L-glutamate 5-semialdehyde from L-glutamate: step 2/2. In terms of biological role, catalyzes the NADPH-dependent reduction of L-glutamate 5-phosphate into L-glutamate 5-semialdehyde and phosphate. The product spontaneously undergoes cyclization to form 1-pyrroline-5-carboxylate. In Photobacterium profundum (strain SS9), this protein is Gamma-glutamyl phosphate reductase.